The sequence spans 206 residues: Guanylate kinase (206 aa).

A Guanylate kinase-like domain is found at 5-184 (GMLIVLSGPS…AAERIKAIIR (180 aa)). Residue 12–19 (GPSGVGKG) participates in ATP binding.

It belongs to the guanylate kinase family.

It is found in the cytoplasm. The enzyme catalyses GMP + ATP = GDP + ADP. Its function is as follows. Essential for recycling GMP and indirectly, cGMP. This chain is Guanylate kinase, found in Lactiplantibacillus plantarum (strain ATCC BAA-793 / NCIMB 8826 / WCFS1) (Lactobacillus plantarum).